The primary structure comprises 244 residues: Orotidine 5'-phosphate decarboxylase (244 aa).

Substrate contacts are provided by residues Asp10, Lys32, 59-68 (DLKLHDIPNT), Thr122, Arg184, Gln193, Gly213, and Arg214. The Proton donor role is filled by Lys61.

It belongs to the OMP decarboxylase family. Type 1 subfamily. Homodimer.

The enzyme catalyses orotidine 5'-phosphate + H(+) = UMP + CO2. Its pathway is pyrimidine metabolism; UMP biosynthesis via de novo pathway; UMP from orotate: step 2/2. Functionally, catalyzes the decarboxylation of orotidine 5'-monophosphate (OMP) to uridine 5'-monophosphate (UMP). This Bacillus caldolyticus protein is Orotidine 5'-phosphate decarboxylase.